We begin with the raw amino-acid sequence, 177 residues long: Adenine phosphoribosyltransferase (177 aa).

The protein belongs to the purine/pyrimidine phosphoribosyltransferase family. Homodimer.

Its subcellular location is the cytoplasm. The enzyme catalyses AMP + diphosphate = 5-phospho-alpha-D-ribose 1-diphosphate + adenine. Its pathway is purine metabolism; AMP biosynthesis via salvage pathway; AMP from adenine: step 1/1. In terms of biological role, catalyzes a salvage reaction resulting in the formation of AMP, that is energically less costly than de novo synthesis. The sequence is that of Adenine phosphoribosyltransferase from Leptospira borgpetersenii serovar Hardjo-bovis (strain JB197).